The sequence spans 851 residues: MDMDTQEAELSSQLENLTINSPRKLRSNAHSNSGKVFKEYESNHDFQDSNFTSQVVEPAISDSVKKPPTMTVLNNYSTVHQKVPSGFSGTTATSHQEAQWKQYFPGIGSGGGTNFGGAVGTANKVPESDLIVSDLVKDLSGVLETNTFKRHLDMKNKTTTMQTHENHDTISISHSKDFFNAEKVSSSFSDDSDSGPAAEAHDVFDGILQKQKSNYLVGSYPSNSNNKNNNNNNNNNNNNSININNKDNARTKEEDEEDTSNSFEFSSSSSMSSSQTQSGRKSKVLKKPPLNTISPGQLGYQFNHTHGAWDPPLNQGLDVSSSHSLDNTSSNQSQFATMVPTGDNHTNGKAPSILDKKAYELTSTKPGDVGYRQKKIQEEENLANSDDTPLDTPKFNDLFTKNGTRAKVKGQMRTSRSISNSNLLEAHKKLKTFPAERVEDITSISEVNTSFNETEKQLISILTSKLSGSPSYDSDWEKILKVDLSRGKLKNMFGMQRLLPNVLVLNLSDNEMNTLEGIPSNVVQLFCSNNKITSAHCSLAGFHDLECLDLSYNLLNTSLKFLSLCHHLQEVNLSYNSIQSLEGIGSSRMKKLNLSNNEINGIIDFEQLILTNNSVVGGWLTVEVLDLSNNNIIGVRNINCLPRLKVLNLNGNPLVSIVESSKMENGTLRALSIKNTGGALSKLQNYKLDDQFTFPYQNLKILKLDGFAQLSKWQKWPATLQILEINGGLASSLPRFSSLKSTNLYSLTIANVRDFTHLPVDLSKELPFLQELHLPGNNLQNAHKLTKTLPRQSVKFLDLRNNPITTPRHDRASTSLHYRQLLQLAGLCQQQCPALATLWLDDTPAPTATNL.

Disordered regions lie at residues 1–31 (MDMD…NAHS) and 216–352 (LVGS…KAPS). Positions 8-21 (AELSSQLENLTINS) are enriched in polar residues. 2 stretches are compositionally biased toward low complexity: residues 223 to 246 (NSNN…INNK) and 260 to 278 (SNSF…QTQS). Residues 291-304 (NTISPGQLGYQFNH) show a composition bias toward polar residues. The span at 320–333 (SSSHSLDNTSSNQS) shows a compositional bias: low complexity. Residue lysine 357 forms a Glycyl lysine isopeptide (Lys-Gly) (interchain with G-Cter in ubiquitin) linkage. A phosphothreonine mark is found at threonine 388 and threonine 392. 2 positions are modified to phosphoserine: serine 417 and serine 419. LRR repeat units follow at residues 544–566 (DLEC…SLCH), 567–588 (HLQE…GSSR), 589–609 (MKKL…EQLI), 621–642 (TVEV…NCLP), and 643–664 (RLKV…SKME).

As to quaternary structure, interacts directly with MPC54, CNM67, SPO21/MPC70, ADY3 and ADY4. Probable component of a spindle pole boby (SPB) complex composed of ADY3, SSP1, DON1, MPC54, SPO21/MPC70, NUD1 and CNM67. In terms of processing, phosphorylated from S/G2 phase until the end of mitosis.

The protein localises to the cytoplasm. Its subcellular location is the cytoskeleton. It localises to the microtubule organizing center. It is found in the spindle pole body. The protein resides in the nucleus envelope. In terms of biological role, involved in astral microtubule organization by binding SCP72 to the outer plaque in a cell-cycle dependent manner. Required for the mitotic exit by facilitating the binding of TEMP1 to CDC15. Also involved in the pathway that organizes the shaping and sizing of the prospore membrane (PSM) during sporulation. In Saccharomyces cerevisiae (strain ATCC 204508 / S288c) (Baker's yeast), this protein is Protein NUD1 (NUD1).